A 796-amino-acid chain; its full sequence is Protein translocase subunit SecA 2 (796 aa).

ATP-binding positions include Gln84, 102–106 (GEGKT), and Asp496.

It belongs to the SecA family. As to quaternary structure, monomer and homodimer. Part of the essential Sec protein translocation apparatus which comprises SecA, SecYEG and auxiliary proteins SecDF. Other proteins may also be involved.

It is found in the cell membrane. It localises to the cytoplasm. It catalyses the reaction ATP + H2O + cellular proteinSide 1 = ADP + phosphate + cellular proteinSide 2.. Its function is as follows. Part of the Sec protein translocase complex. Interacts with the SecYEG preprotein conducting channel. Has a central role in coupling the hydrolysis of ATP to the transfer of proteins into and across the cell membrane, serving as an ATP-driven molecular motor driving the stepwise translocation of polypeptide chains across the membrane. The chain is Protein translocase subunit SecA 2 from Staphylococcus epidermidis (strain ATCC 12228 / FDA PCI 1200).